Reading from the N-terminus, the 335-residue chain is Glucokinase (335 aa).

Position 11-16 (11-16 (ADIGGT)) interacts with ATP.

Belongs to the bacterial glucokinase family.

The protein localises to the cytoplasm. The enzyme catalyses D-glucose + ATP = D-glucose 6-phosphate + ADP + H(+). The chain is Glucokinase from Stenotrophomonas maltophilia (strain K279a).